The sequence spans 200 residues: Phospholipase A2 inhibitor gamma subunit A (200 aa).

The first 19 residues, 1-19 (MKSLHTICLLFIFIARGNS), serve as a signal peptide directing secretion. Disulfide bonds link Cys22–Cys46, Cys25–Cys32, Cys39–Cys67, Cys73–Cys94, Cys95–Cys100, Cys118–Cys143, Cys136–Cys165, and Cys169–Cys191. An N-linked (GlcNAc...) asparagine glycan is attached at Asn176.

It belongs to the CNF-like-inhibitor family. As to quaternary structure, occurs as a mixture of oligomers. Tetrameric arrangement appears to be the predominant quaternary structure. In terms of tissue distribution, expressed by the liver.

It is found in the secreted. Inhibits the enzymatic activity of phospholipase A2 (PA2). The polypeptide is Phospholipase A2 inhibitor gamma subunit A (Gloydius brevicaudus siniticus (Chinese mamushi)).